The sequence spans 608 residues: Afamin (608 aa).

The signal sequence occupies residues 1 to 21; sequence MRHLKLTGFIFFLLSLTESLA. Albumin domains lie at 22-210, 211-403, and 404-599; these read LPTK…APIT, QYLK…KFNE, and TTER…KTGD. Asn33 carries N-linked (GlcNAc...) asparagine glycosylation. 10 disulfide bridges follow: Cys77–Cys86, Cys99–Cys114, Cys113–Cys124, Cys148–Cys193, Cys224–Cys270, Cys269–Cys277, Cys289–Cys303, Cys302–Cys313, Cys340–Cys385, and Cys384–Cys393. A glycan (N-linked (GlcNAc...) asparagine) is linked at Asn109. A glycan (N-linked (GlcNAc...) asparagine) is linked at Asn153. Residues 215-319 are binding pocket for hydrophobic ligands; sequence ALSSYQRNVC…RADCIINANK (105 aa). Asn402 carries N-linked (GlcNAc...) asparagine glycosylation. 5 disulfide bridges follow: Cys416–Cys462, Cys461–Cys470, Cys483–Cys499, Cys498–Cys509, and Cys580–Cys589. N-linked (GlcNAc...) asparagine glycosylation occurs at Asn488. The interval 585 to 608 is disordered; that stretch reads KPEACFSPESSKTGDVSQDAEKQR.

Belongs to the ALB/AFP/VDB family. In terms of assembly, forms a 1:1 complex with Wnt family members; interacts with WNT1, WNT2B, WNT3, WNT3A, WNT5A, WNT7A, WNT7B, WNT8, WNT9A, WNT9B, WNT10A and WNT10B. N-glycosylated; more than 90% of the glycans are sialylated.

It is found in the secreted. Functions as a carrier for hydrophobic molecules in body fluids. Essential for the solubility and activity of lipidated Wnt family members, including WNT1, WNT2B, WNT3, WNT3A, WNT5A, WNT7A, WNT7B, WNT8, WNT9A, WNT9B, WNT10A and WNT10B. Binds vitamin E. May transport vitamin E in body fluids under conditions where the lipoprotein system is not sufficient. May be involved in the transport of vitamin E across the blood-brain barrier. The polypeptide is Afamin (Afm) (Rattus norvegicus (Rat)).